A 431-amino-acid polypeptide reads, in one-letter code: MATHEEFIRTQVFGTVFEITNRYTDLNPVGMGAFGLVCSATDTLAGQPVAIKKIMKPFSTAVLAKRTYRELKLLKHLRHENLICLQDIFLSPLEDIYFVTELQGTDLHRLLQTRPLEKQFVQYFLYQILRGLKYVHSAGVIHRDLKPSNILINENCDLKICDFGLARIQDPQMTGYVSTRYYRAPEIMLTWQKYDVEVDIWSAGCIFSEMIEGKPLFPGKDHVHQFSIITDLLGSPPRDVINTICSENTLKFVTSLPHRDPVPFQERFKTVEPDAVDLLERMLVFDPKKRITAADALVHPYLAPYHDPTDEPTAEAQFDWDFNDADLPVDTWRVMMYSEILDFHKIGGGDGQIDTNAAFDDQVAAATAAAAHAAAMAQHHHQTQQQSSGKHTNPTTSSSAATHNSNGPHSNHDAIANYGNQAVHYANEFQQ.

One can recognise a Protein kinase domain in the interval 23–302 (YTDLNPVGMG…AADALVHPYL (280 aa)). Residues 29 to 37 (VGMGAFGLV) and Lys-52 contribute to the ATP site. Asp-144 acts as the Proton acceptor in catalysis. Thr-174 is modified (phosphothreonine). The TXY signature appears at 174-176 (TGY). Tyr-176 is subject to Phosphotyrosine. Over residues 374–406 (AAMAQHHHQTQQQSSGKHTNPTTSSSAATHNSN) the composition is skewed to low complexity. A disordered region spans residues 374 to 415 (AAMAQHHHQTQQQSSGKHTNPTTSSSAATHNSNGPHSNHDAI).

It belongs to the protein kinase superfamily. Ser/Thr protein kinase family. MAP kinase subfamily. HOG1 sub-subfamily. It depends on Mg(2+) as a cofactor. Dually phosphorylated on Thr-174 and Tyr-176, which activates the enzyme.

Its subcellular location is the cytoplasm. The protein localises to the nucleus. The catalysed reaction is L-seryl-[protein] + ATP = O-phospho-L-seryl-[protein] + ADP + H(+). The enzyme catalyses L-threonyl-[protein] + ATP = O-phospho-L-threonyl-[protein] + ADP + H(+). Its activity is regulated as follows. Activated by tyrosine and threonine phosphorylation. Functionally, proline-directed serine/threonine-protein kinase involved in a signal transduction pathway that is activated by changes in the osmolarity of the extracellular environment. Controls osmotic regulation of transcription of target genes. This Zygosaccharomyces rouxii (strain ATCC 2623 / CBS 732 / NBRC 1130 / NCYC 568 / NRRL Y-229) protein is Mitogen-activated protein kinase HOG1 (HOG1).